The chain runs to 716 residues: Cytoplasmic polyadenylation element-binding protein 3 (716 aa).

Positions 1–11 (MQDDLLMDKSK) are enriched in basic and acidic residues. 2 disordered regions span residues 1 to 118 (MQDD…WSTG) and 162 to 209 (AQTQ…RSAA). Composition is skewed to low complexity over residues 13-31 (QPQS…QQLQ) and 54-63 (SSAVPALSPA). A compositionally biased stretch (pro residues) spans 91-100 (PQQPPPPQEP). Residues 107-118 (LSPSFGSTWSTG) show a composition bias toward polar residues. A compositionally biased stretch (pro residues) spans 169 to 186 (QPPPPAPQPPQPAQPPQA). A compositionally biased stretch (low complexity) spans 187–209 (QPSQQRRSPASPSQAPYAQRSAA). A phosphoserine mark is found at S194, S197, and S291. R309 is modified (asymmetric dimethylarginine). A phosphoserine mark is found at S419 and S420. 2 RRM domains span residues 459 to 550 (RKVF…PWNL) and 567 to 649 (KTIF…PYVL).

Belongs to the RRM CPEB family. As to quaternary structure, following synaptic activity, aggregates to form amyloid-like oligomers. Aggregation requires an intact actin cytoskeleton. Interacts with STAT5B; this inhibits STAT5B-mediated transcriptional activation. Interacts with E3 ubiquitin-protein ligase NEURL1; this leads to monoubiquitination and activation of CPEB3. Interacts with CAPN2; this leads to cleavage of CPEB3. Interacts (via C-terminal RNA-binding region) with TOB1; TOB1 also binds CNOT7/CAF1 and recruits it to CPEB3 to form a ternary complex. Interacts with SUMO-conjugating enzyme UBC9. Interacts with IPO5; the interaction is enhanced in a RAN-regulated manner following neuronal stimulation and mediates CPEB3 nuclear import. Interacts with exportin XPO1/CRM1. In terms of processing, activated by NEURL1-mediated monoubiquitination, resulting in the growth of new dendritic spines and increased levels of GRIA1 and GRIA2. NEURL1-mediated monoubiquitination facilitates synaptic plasticity and hippocampal-dependent memory storage. Post-translationally, under basal unstimulated conditions when CPEB3 is mainly unaggregated, sumoylated and acts as a translational repressor. Following neuronal stimulation, becomes desumoylated and aggregated which is required for the translation of mRNA targets and for dendritic filopodia formation. Following neuronal stimulation, cleaved by CAPN2 which abolishes its translational repressor activity, leading to translation of CPEB3 target mRNAs. In terms of processing, phosphorylation is enhanced by neuronal stimulation. Highly expressed in brain (at protein level). In brain, expressed in the hippocampus, granule cells and interneurons of the cerebellum, and mitral cells of the olfactory bulb (at protein level). Detected in the spinal cord and in peripheral dorsal root ganglia (at protein level). In the retina, strongly expressed in the retinal ganglion layer and, to a lesser extent, in the inner margin of the inner nuclear layer with expression also detected in the inner and outer plexiform layers (at protein level). Highly expressed in brain and heart, less in liver, kidney, embryo, skeletal muscle, lung and ovary. Weakly expressed in granular cells of dentate gyrus and the pyramidal cells of CA3 and CA1 of the hippocampus.

The protein localises to the cytoplasm. It localises to the nucleus. The protein resides in the synapse. Its subcellular location is the cell projection. It is found in the dendrite. The protein localises to the postsynaptic density. Sequence-specific RNA-binding protein which acts as a translational repressor in the basal unstimulated state but, following neuronal stimulation, acts as a translational activator. In contrast to CPEB1, does not bind to the cytoplasmic polyadenylation element (CPE), a uridine-rich sequence element within the mRNA 3'-UTR, but binds to a U-rich loop within a stem-loop structure. Required for the consolidation and maintenance of hippocampal-based long term memory. In the basal state, binds to the mRNA 3'-UTR of the glutamate receptors GRIA1 and GRIA2 and negatively regulates their translation. Also represses the translation of DLG4, GRIN1 GRIN2A and GRIN2B. When activated, acts as a translational activator of GRIA1 and GRIA2. In the basal state, suppresses SUMO2 translation but activates it following neuronal stimulation. Binds to the 3'-UTR of TRPV1 mRNA and represses TRPV1 translation which is required to maintain normal thermoception. Binds actin mRNA, leading to actin translational repression in the basal state and to translational activation following neuronal stimulation. Negatively regulates target mRNA levels by binding to TOB1 which recruits CNOT7/CAF1 to a ternary complex and this leads to target mRNA deadenylation and decay. In addition to its role in translation, binds to and inhibits the transcriptional activation activity of STAT5B without affecting its dimerization or DNA-binding activity. This, in turn, represses transcription of the STAT5B target gene EGFR which has been shown to play a role in enhancing learning and memory performance. In contrast to CPEB1, CPEB2 and CPEB4, not required for cell cycle progression. The sequence is that of Cytoplasmic polyadenylation element-binding protein 3 (Cpeb3) from Mus musculus (Mouse).